Reading from the N-terminus, the 504-residue chain is Maturase K (504 aa).

It belongs to the intron maturase 2 family. MatK subfamily.

The protein localises to the plastid. Its subcellular location is the chloroplast. Functionally, usually encoded in the trnK tRNA gene intron. Probably assists in splicing its own and other chloroplast group II introns. In Quercus lyrata (Overcup oak), this protein is Maturase K.